Here is a 469-residue protein sequence, read N- to C-terminus: Neuraminidase (469 aa).

Residues 1–12 (MNTNQRIITIGT) lie on the Intravirion side of the membrane. Positions 11-33 (GTICLIVGIISLLLQIGNIILLW) are involved in apical transport and lipid raft association. A helical membrane pass occupies residues 13–33 (ICLIVGIISLLLQIGNIILLW). Residues 34 to 469 (MSHSIQTGEK…GADLPFTIDK (436 aa)) lie on the Virion surface side of the membrane. The segment at 36 to 90 (HSIQTGEKSHPKVCNQSVITYENNTWVNQTYVNISNTNIAAGQGVTPIILAGNSS) is hypervariable stalk region. N50, N58, N63, N68, and N88 each carry an N-linked (GlcNAc...) asparagine; by host glycan. Positions 91 to 469 (LCPISGWAIY…GADLPFTIDK (379 aa)) are head of neuraminidase. Cystine bridges form between C92–C417, C124–C129, C184–C231, C233–C238, C279–C292, C281–C290, C318–C335, and C421–C446. R118 lines the substrate pocket. The N-linked (GlcNAc...) asparagine; by host glycan is linked to N146. D151 serves as the catalytic Proton donor/acceptor. Residue R152 coordinates substrate. An N-linked (GlcNAc...) asparagine; by host glycan is attached at N235. Substrate is bound at residue 277 to 278 (EE). R293 is a substrate binding site. Ca(2+)-binding residues include D294, D324, and N344. R368 lines the substrate pocket. Y402 (nucleophile) is an active-site residue.

Belongs to the glycosyl hydrolase 34 family. In terms of assembly, homotetramer. The cofactor is Ca(2+). N-glycosylated.

Its subcellular location is the virion membrane. The protein localises to the host apical cell membrane. It carries out the reaction Hydrolysis of alpha-(2-&gt;3)-, alpha-(2-&gt;6)-, alpha-(2-&gt;8)- glycosidic linkages of terminal sialic acid residues in oligosaccharides, glycoproteins, glycolipids, colominic acid and synthetic substrates.. Inhibited by the neuraminidase inhibitors zanamivir (Relenza) and oseltamivir (Tamiflu). These drugs interfere with the release of progeny virus from infected cells and are effective against all influenza strains. Resistance to neuraminidase inhibitors is quite rare. Functionally, catalyzes the removal of terminal sialic acid residues from viral and cellular glycoconjugates. Cleaves off the terminal sialic acids on the glycosylated HA during virus budding to facilitate virus release. Additionally helps virus spread through the circulation by further removing sialic acids from the cell surface. These cleavages prevent self-aggregation and ensure the efficient spread of the progeny virus from cell to cell. Otherwise, infection would be limited to one round of replication. Described as a receptor-destroying enzyme because it cleaves a terminal sialic acid from the cellular receptors. May facilitate viral invasion of the upper airways by cleaving the sialic acid moieties on the mucin of the airway epithelial cells. Likely to plays a role in the budding process through its association with lipid rafts during intracellular transport. May additionally display a raft-association independent effect on budding. Plays a role in the determination of host range restriction on replication and virulence. Sialidase activity in late endosome/lysosome traffic seems to enhance virus replication. The chain is Neuraminidase from Influenza A virus (strain A/New Jersey/8/1976 H1N1).